A 123-amino-acid chain; its full sequence is Protein Wnt-3a (123 aa).

Serine 1 is lipidated: O-palmitoleoyl serine. A disulfide bridge connects residues cysteine 89 and cysteine 104. A glycan (N-linked (GlcNAc...) asparagine) is linked at asparagine 90.

The protein belongs to the Wnt family. Disulfide bonds have critical and distinct roles in secretion and activity. Loss of each conserved cysteine results in high molecular weight oxidized Wnt oligomers, which are formed through inter-Wnt disulfide bonding. Post-translationally, palmitoleoylation is required for efficient binding to frizzled receptors. Depalmitoleoylation leads to Wnt signaling pathway inhibition.

It localises to the secreted. Its subcellular location is the extracellular space. The protein resides in the extracellular matrix. Functionally, ligand for members of the frizzled family of seven transmembrane receptors. Functions in the canonical Wnt signaling pathway that results in activation of transcription factors of the TCF/LEF family. Required for normal embryonic mesoderm development and formation of caudal somites. Required for normal morphogenesis of the developing neural tube. The protein is Protein Wnt-3a (WNT-3A) of Alopias vulpinus (Common thresher shark).